The sequence spans 86 residues: UPF0386 protein RC1_1783 (86 aa).

The protein belongs to the UPF0386 family.

This chain is UPF0386 protein RC1_1783, found in Rhodospirillum centenum (strain ATCC 51521 / SW).